Here is a 208-residue protein sequence, read N- to C-terminus: 3-demethoxyubiquinol 3-hydroxylase (208 aa).

Fe cation is bound by residues E57, E87, H90, E139, E171, and H174.

It belongs to the COQ7 family. Fe cation serves as cofactor.

It is found in the cell membrane. The enzyme catalyses a 5-methoxy-2-methyl-3-(all-trans-polyprenyl)benzene-1,4-diol + AH2 + O2 = a 3-demethylubiquinol + A + H2O. It functions in the pathway cofactor biosynthesis; ubiquinone biosynthesis. Catalyzes the hydroxylation of 2-nonaprenyl-3-methyl-6-methoxy-1,4-benzoquinol during ubiquinone biosynthesis. In Burkholderia multivorans (strain ATCC 17616 / 249), this protein is 3-demethoxyubiquinol 3-hydroxylase.